We begin with the raw amino-acid sequence, 61 residues long: Large ribosomal subunit protein uL30 (61 aa).

The protein belongs to the universal ribosomal protein uL30 family. Part of the 50S ribosomal subunit.

This is Large ribosomal subunit protein uL30 from Dichelobacter nodosus (strain VCS1703A).